Reading from the N-terminus, the 547-residue chain is Leiomodin-2 (547 aa).

The segment at 1–47 is interaction with tropomyosin alpha; sequence MSTFGYRRGLSKYESIDEDELLASLSAEELKELERELEDIEPDRNLP. Interaction with actin stretches follow at residues 1-161, 162-497, and 521-540; these read MSTF…SDNS, KPKI…KEIK, and AHEN…LKRV. Residues serine 11, serine 15, and serine 24 each carry the phosphoserine modification. The stretch at 16–41 forms a coiled coil; the sequence is IDEDELLASLSAEELKELERELEDIE. Disordered stretches follow at residues 91 to 162 and 352 to 533; these read KVAE…DNSK and MDKQ…RGSS. Composition is skewed to acidic residues over residues 95 to 104 and 112 to 139; these read DKEESEEELI and VSEE…EEER. The stretch at 113–148 forms a coiled coil; it reads SEEVYTEEEEEESQEEEEEEDSDEEERTIETAKGIN. Residues 149-160 are compositionally biased toward polar residues; sequence GTVNYDSVNSDN. Basic and acidic residues predominate over residues 352–367; the sequence is MDKQRQKRLQEQKQQE. Serine 400 is modified (phosphoserine). Residues 419–449 show a composition bias toward pro residues; it reads ATPPPPPPPPPPPPPSSQRLPPPPPPPPPPL. Positions 465-475 are enriched in polar residues; that stretch reads QQESAQRALQN. Residues 477–487 are compositionally biased toward basic residues; it reads QKKKKGKKVKK. A compositionally biased stretch (basic and acidic residues) spans 494–512; that stretch reads KEIKNSLRSVQEKKMEDSS. Residues 521–540 form the WH2 domain; that stretch reads AHENLMEAIRGSSIKQLKRV.

It belongs to the tropomodulin family. As to quaternary structure, can bind at least three actin monomers and thereby provides a nucleus for actin filament formation. Interacts (via N-terminus) with tropomyosin alpha (TPM1) (via N-terminus). May also interact with TPM2 (via N-terminus). Interacts with FLII. Specifically expressed in heart and skeletal muscles, with higher levels in heart (at protein level). Not expressed in other tissues.

It localises to the cytoplasm. The protein localises to the myofibril. The protein resides in the sarcomere. It is found in the m line. Its subcellular location is the cytoskeleton. Mediates nucleation of actin filaments and thereby promotes actin polymerization. Plays a role in the regulation of actin filament length. Required for normal sarcomere organization in the heart, and for normal heart function. The sequence is that of Leiomodin-2 (LMOD2) from Homo sapiens (Human).